The primary structure comprises 63 residues: Disintegrin schistatin-like subunit B (63 aa).

In terms of domain architecture, Disintegrin spans 1–63 (NSVNPCCDPQ…TPDCPRNRYN (63 aa)). Intrachain disulfides connect cysteine 6–cysteine 29, cysteine 20–cysteine 26, cysteine 25–cysteine 50, and cysteine 38–cysteine 57. The short motif at 42–44 (RGD) is the Cell attachment site element.

This sequence belongs to the disintegrin family. Dimeric disintegrin subfamily. In terms of assembly, heterodimer with subunit A; disulfide-linked. As to expression, expressed by the venom gland.

Its subcellular location is the secreted. May bind to both alpha-IIb/beta-3 (ITGA2B/ITGB3) and alpha-V/beta-3 (ITGAV/ITGB3) integrins, and may inhibit platelet aggregation. The polypeptide is Disintegrin schistatin-like subunit B (Echis carinatus (Saw-scaled viper)).